Consider the following 467-residue polypeptide: uncharacterized protein (467 aa).

The tract at residues 416 to 467 (KQQRAQTAVVGTTKELVSKATHMKPPRTPPGEAEHRKRSQSLAICQWNKNSR) is disordered. Over residues 455–467 (QSLAICQWNKNSR) the composition is skewed to polar residues.

This is an uncharacterized protein from Homo sapiens (Human).